A 197-amino-acid chain; its full sequence is dITP/XTP pyrophosphatase (197 aa).

A substrate-binding site is contributed by Thr-8–Lys-13. Mg(2+) is bound by residues Glu-40 and Asp-69. Asp-69 acts as the Proton acceptor in catalysis. Residues Ser-70, Phe-154 to Asp-157, Lys-177, and His-182 to Arg-183 contribute to the substrate site.

The protein belongs to the HAM1 NTPase family. As to quaternary structure, homodimer. The cofactor is Mg(2+).

The catalysed reaction is XTP + H2O = XMP + diphosphate + H(+). The enzyme catalyses dITP + H2O = dIMP + diphosphate + H(+). It catalyses the reaction ITP + H2O = IMP + diphosphate + H(+). In terms of biological role, pyrophosphatase that catalyzes the hydrolysis of nucleoside triphosphates to their monophosphate derivatives, with a high preference for the non-canonical purine nucleotides XTP (xanthosine triphosphate), dITP (deoxyinosine triphosphate) and ITP. Seems to function as a house-cleaning enzyme that removes non-canonical purine nucleotides from the nucleotide pool, thus preventing their incorporation into DNA/RNA and avoiding chromosomal lesions. This is dITP/XTP pyrophosphatase (rdgB) from Salmonella paratyphi A (strain ATCC 9150 / SARB42).